The primary structure comprises 133 residues: MSRKIIPALTIFFGPILILTAITQFVQKDEEKDLKEFKKNQPANYQSNKENNAQIMKFIRDSAKGDRIDFFAGLEEEMKTIESIKNQNSLNKEKQQQQQQQQQQQQQQQQQQQQQQKPNTPPTPLTTPSTPKK.

Positions 1–23 are cleaved as a signal peptide; sequence MSRKIIPALTIFFGPILILTAIT. The tract at residues 82–133 is disordered; it reads ESIKNQNSLNKEKQQQQQQQQQQQQQQQQQQQQQQKPNTPPTPLTTPSTPKK. Positions 96–118 are enriched in low complexity; sequence QQQQQQQQQQQQQQQQQQQQQKP.

Its subcellular location is the secreted. This is an uncharacterized protein from Dictyostelium discoideum (Social amoeba).